A 475-amino-acid chain; its full sequence is Doublecortin domain-containing protein 2 (475 aa).

Doublecortin domains are found at residues 17–100 and 139–221; these read KSVL…LNYL and CTIF…LPYS. The disordered stretch occupies residues 234–475; the sequence is YGQKASSLPP…EANKASSAVA (242 aa). A compositionally biased stretch (polar residues) spans 252 to 272; it reads GSGNYRQSKSTIGSSDNSSPQ. Serine 270 carries the phosphoserine modification. Residues 353 to 365 are compositionally biased toward basic and acidic residues; sequence EKTSKDANQKEDF. Positions 407 to 425 are enriched in acidic residues; it reads TDEENGEELDQVAEELQPT.

In terms of assembly, interacts with DVL1, DVL2 and DVL3. In terms of tissue distribution, expressed in hair cells of the inner ear.

The protein resides in the cell projection. It is found in the cilium. It localises to the cytoplasm. Its subcellular location is the cytoskeleton. The protein localises to the cilium axoneme. The protein resides in the kinocilium. Its function is as follows. Protein that plays a role in the inhibition of canonical Wnt signaling pathway. May be involved in neuronal migration during development of the cerebral neocortex. Involved in the control of ciliogenesis and ciliary length. This chain is Doublecortin domain-containing protein 2 (Dcdc2), found in Mus musculus (Mouse).